A 319-amino-acid chain; its full sequence is GTP 3',8-cyclase (319 aa).

The Radical SAM core domain occupies 4–227 (KHGRKINYLR…VETDKSSTAL (224 aa)). GTP is bound at residue R13. Positions 20 and 24 each coordinate [4Fe-4S] cluster. Residue Y26 participates in S-adenosyl-L-methionine binding. C27 contributes to the [4Fe-4S] cluster binding site. GTP is bound at residue R63. Residue G67 participates in S-adenosyl-L-methionine binding. A GTP-binding site is contributed by T94. S118 is a binding site for S-adenosyl-L-methionine. K155 is a binding site for GTP. S-adenosyl-L-methionine is bound at residue M189. Positions 249 and 252 each coordinate [4Fe-4S] cluster. 254–256 (RVR) is a binding site for GTP. Residue C266 coordinates [4Fe-4S] cluster.

Belongs to the radical SAM superfamily. MoaA family. In terms of assembly, monomer and homodimer. [4Fe-4S] cluster is required as a cofactor.

The enzyme catalyses GTP + AH2 + S-adenosyl-L-methionine = (8S)-3',8-cyclo-7,8-dihydroguanosine 5'-triphosphate + 5'-deoxyadenosine + L-methionine + A + H(+). Its pathway is cofactor biosynthesis; molybdopterin biosynthesis. In terms of biological role, catalyzes the cyclization of GTP to (8S)-3',8-cyclo-7,8-dihydroguanosine 5'-triphosphate. In Clostridium botulinum (strain Langeland / NCTC 10281 / Type F), this protein is GTP 3',8-cyclase.